Reading from the N-terminus, the 232-residue chain is Ubiquinone biosynthesis O-methyltransferase (232 aa).

S-adenosyl-L-methionine contacts are provided by R36, G55, D76, and L120.

It belongs to the methyltransferase superfamily. UbiG/COQ3 family.

It carries out the reaction a 3-demethylubiquinol + S-adenosyl-L-methionine = a ubiquinol + S-adenosyl-L-homocysteine + H(+). It catalyses the reaction a 3-(all-trans-polyprenyl)benzene-1,2-diol + S-adenosyl-L-methionine = a 2-methoxy-6-(all-trans-polyprenyl)phenol + S-adenosyl-L-homocysteine + H(+). The protein operates within cofactor biosynthesis; ubiquinone biosynthesis. Its function is as follows. O-methyltransferase that catalyzes the 2 O-methylation steps in the ubiquinone biosynthetic pathway. This is Ubiquinone biosynthesis O-methyltransferase from Pseudomonas aeruginosa (strain ATCC 15692 / DSM 22644 / CIP 104116 / JCM 14847 / LMG 12228 / 1C / PRS 101 / PAO1).